The sequence spans 438 residues: Keratin, type I cytoskeletal 18 (438 aa).

Residues 4 to 83 (AVSSRSTVVS…TLSGNAVISN (80 aa)) are head. Positions 84 to 119 (EKETMQDLNDRLSNYLETVRRLENANQQLEIQIREA) are coil 1A. The IF rod domain occupies 84-395 (EKETMQDLND…HLLGGEDSDT (312 aa)). The linker 1 stretch occupies residues 120–136 (MEKRGPSVRDYSNYEKI). The tract at residues 137-228 (IKELRDQIYD…KNHEDEVIAL (92 aa)) is coil 1B. The tract at residues 229-252 (RNQVNSCGVQVDLDAPKGTDLAEI) is linker 12. Residues 253-393 (MATLRAEYEA…YRHLLGGEDS (141 aa)) are coil 2. A tail region spans residues 394 to 438 (DTLSLQDALSAMKVSNVQTVQKIVVTTQKLVDGKVVEDSTVTETK).

Belongs to the intermediate filament family. As to quaternary structure, heterotetramer of two type I and two type II keratins. Keratin-18 associates with keratin-8. In terms of processing, phosphorylated. Proteolytically cleaved by caspases during epithelial cell apoptosis. As to expression, expressed at low levels in skin.

Functionally, when phosphorylated, plays a role in filament reorganization. The sequence is that of Keratin, type I cytoskeletal 18 from Protopterus aethiopicus (Marbled lungfish).